Here is a 334-residue protein sequence, read N- to C-terminus: Adenosine deaminase (334 aa).

Zn(2+) contacts are provided by His12 and His14. Substrate is bound by residues His14, Asp16, and Gly170. His197 contributes to the Zn(2+) binding site. Catalysis depends on Glu200, which acts as the Proton donor. A Zn(2+)-binding site is contributed by Asp278. Substrate is bound at residue Asp279.

Belongs to the metallo-dependent hydrolases superfamily. Adenosine and AMP deaminases family. Adenosine deaminase subfamily. Requires Zn(2+) as cofactor.

The enzyme catalyses adenosine + H2O + H(+) = inosine + NH4(+). It carries out the reaction 2'-deoxyadenosine + H2O + H(+) = 2'-deoxyinosine + NH4(+). Its function is as follows. Catalyzes the hydrolytic deamination of adenosine and 2-deoxyadenosine. This Yersinia pseudotuberculosis serotype O:1b (strain IP 31758) protein is Adenosine deaminase.